A 181-amino-acid polypeptide reads, in one-letter code: Cytidylate kinase (181 aa).

12-20 (GLAGSGTTT) is an ATP binding site.

Belongs to the cytidylate kinase family. Type 2 subfamily.

It is found in the cytoplasm. It catalyses the reaction CMP + ATP = CDP + ADP. The catalysed reaction is dCMP + ATP = dCDP + ADP. This Pyrococcus abyssi (strain GE5 / Orsay) protein is Cytidylate kinase (cmk).